A 596-amino-acid polypeptide reads, in one-letter code: DNA mismatch repair protein MutL (596 aa).

Belongs to the DNA mismatch repair MutL/HexB family.

This protein is involved in the repair of mismatches in DNA. It is required for dam-dependent methyl-directed DNA mismatch repair. May act as a 'molecular matchmaker', a protein that promotes the formation of a stable complex between two or more DNA-binding proteins in an ATP-dependent manner without itself being part of a final effector complex. The polypeptide is DNA mismatch repair protein MutL (Leptospira borgpetersenii serovar Hardjo-bovis (strain L550)).